A 1312-amino-acid polypeptide reads, in one-letter code: AT-rich interactive domain-containing protein 4B (1312 aa).

Disordered stretches follow at residues 124–166 (PLTN…EDDR) and 266–306 (KTEL…EPFP). 3 positions are modified to phosphoserine: Ser276, Ser295, and Ser296. Over residues 277-305 (EAEEEEEEEDDEKEKEDNSSEEEEEIEPF) the composition is skewed to acidic residues. The region spanning 306–398 (PEERENFLQQ…YLYGFEEYCR (93 aa)) is the ARID domain. Glycyl lysine isopeptide (Lys-Gly) (interchain with G-Cter in SUMO2) cross-links involve residues Lys429, Lys440, and Lys462. Disordered regions lie at residues 458 to 577 (EIER…KVQV), 635 to 680 (IKHR…EMVS), 708 to 894 (QASE…TTGF), 909 to 1212 (LNNS…NRLP), and 1252 to 1288 (SEVA…SITA). The segment at 465–473 (IKPSLGSKK) is antigenic epitope. Ser483 carries the post-translational modification Phosphoserine. The span at 483-496 (SDQEKEVNIKKPED) shows a compositional bias: basic and acidic residues. Lys517 participates in a covalent cross-link: Glycyl lysine isopeptide (Lys-Gly) (interchain with G-Cter in SUMO2). Residues 532–567 (NKEEDEDDEEAEEEEEEEEEEEDEDDDDNNEEEEFE) show a composition bias toward acidic residues. The Tudor-knot domain occupies 572–624 (GMKVQVRYGRGKNQKMYEASIKDSDVEGGEVLYLVHYCGWNVRYDEWIKADKI). Residues 643-656 (NKLDKEKDKDEKYS) are compositionally biased toward basic and acidic residues. A phosphoserine mark is found at Ser666, Ser675, and Ser717. 2 stretches are compositionally biased toward basic and acidic residues: residues 722-754 (ERGA…KEEQ) and 778-787 (SPERLRKDIE). Residues 728–754 (MDNNGKEESKIDHLTNNRNDLISKEEQ) are a coiled coil. Residue Lys751 forms a Glycyl lysine isopeptide (Lys-Gly) (interchain with G-Cter in SUMO2) linkage. Phosphoserine occurs at positions 778 and 790. Acidic residues predominate over residues 788–799 (VLSEDTDYEEDE). Thr793 is modified (phosphothreonine). Composition is skewed to basic and acidic residues over residues 807-816 (VKKDTTDKSS), 828-852 (CNTE…KESL), 909-927 (LNNS…RKDV), and 995-1010 (KPIE…RKAE). At Ser1014 the chain carries Phosphoserine. Phosphothreonine is present on Thr1026. Over residues 1028–1037 (ESPSSVTVTE) the composition is skewed to low complexity. Ser1029 bears the Phosphoserine mark. A compositionally biased stretch (polar residues) spans 1038–1047 (GSRQQSSVTV). Residues 1056–1065 (EEVRSIKSET) are compositionally biased toward basic and acidic residues. Over residues 1087 to 1101 (SSPAGFDASVSSSSS) the composition is skewed to low complexity. The segment at 1130 to 1137 (KKQKRSHK) is antigenic epitope. The span at 1130-1148 (KKQKRSHKATVVNNKKKGK) shows a compositional bias: basic residues. A Phosphothreonine modification is found at Thr1150. Ser1152, Ser1153, Ser1155, and Ser1159 each carry phosphoserine. A compositionally biased stretch (polar residues) spans 1162-1191 (ESITKSQPVKSVSTGMKSHSTKSPARTQSP). Residues 1196–1208 (KNGDKDPDLKEPS) show a composition bias toward basic and acidic residues. A coiled-coil region spans residues 1231-1270 (ERITILQEKLQEIRKHYLSLKSEVASIDRRRKRLKKKERE). The span at 1272–1288 (AATSSSSSSPSSSSITA) shows a compositional bias: low complexity.

Component of a Sin3A corepressor complex consisting of SIN3A, SAP130, SUDS3/SAP45, SAP180, HDAC1 and HDAC2. Interacts with ARID4A. Interacts with AR. As to expression, highly expressed in the testis and in breast, lung, colon, pancreatic and ovarian cancers. Expressed at low levels in the thymus, prostate and ovary.

The protein localises to the nucleus. Its subcellular location is the cytoplasm. Functionally, acts as a transcriptional repressor. May function in the assembly and/or enzymatic activity of the Sin3A corepressor complex or in mediating interactions between the complex and other regulatory complexes. Plays a role in the regulation of epigenetic modifications at the PWS/AS imprinting center near the SNRPN promoter, where it might function as part of a complex with RB1 and ARID4A. Involved in spermatogenesis, together with ARID4A, where it functions as a transcriptional coactivator for AR (androgen receptor) and enhances expression of genes required for sperm maturation. Regulates expression of the tight junction protein CLDN3 in the testis, which is important for integrity of the blood-testis barrier. Plays a role in myeloid homeostasis where it regulates the histone methylation state of bone marrow cells and expression of various genes involved in hematopoiesis. May function as a leukemia suppressor. The polypeptide is AT-rich interactive domain-containing protein 4B (ARID4B) (Homo sapiens (Human)).